Consider the following 148-residue polypeptide: UPF0756 membrane protein YeaL (148 aa).

4 helical membrane-spanning segments follow: residues 14–34, 51–71, 80–100, and 121–141; these read ALGFVSHNTTVAVSILVLIIV, LTIGIIILTIGVMAPIASGSL, FFNWKSLVAIAVGVIVSWLGG, and VLGVALFRGVPVGPLIAAGLV.

Belongs to the UPF0756 family.

The protein resides in the cell membrane. The chain is UPF0756 membrane protein YeaL from Escherichia fergusonii (strain ATCC 35469 / DSM 13698 / CCUG 18766 / IAM 14443 / JCM 21226 / LMG 7866 / NBRC 102419 / NCTC 12128 / CDC 0568-73).